The primary structure comprises 382 residues: Gap junction alpha-1 protein (382 aa).

Residues 2–23 (GDWSALGKLLDKVQAYSTAGGK) are Cytoplasmic-facing. Serine 5 carries the post-translational modification Phosphoserine. Residues 24–44 (VWLSVLFIFRILLLGTAVESA) traverse the membrane as a helical segment. Topologically, residues 45 to 76 (WGDEQSAFRCNTQQPGCENVCYDKSFPISHVR) are extracellular. 2 cysteine pairs are disulfide-bonded: cysteine 54/cysteine 192 and cysteine 187/cysteine 198. A helical transmembrane segment spans residues 77 to 97 (FWVLQIIFVSVPTLLYLAHVF). At 98–155 (YVMRKEEKLNKKEEELKVAQTDGVNVEMHLKQIEIKKFKYGIEEHGKVKMRGGLLRTY) the chain is on the cytoplasmic side. Residue lysine 144 forms a Glycyl lysine isopeptide (Lys-Gly) (interchain with G-Cter in SUMO) linkage. A helical membrane pass occupies residues 156–176 (IISILFKSVFEVAFLLIQWYI). Topologically, residues 177-207 (YGFSLSAVYTCKRDPCPHQVDCFLSRPTEKT) are extracellular. The helical transmembrane segment at 208–228 (IFIIFMLVVSLVSLALNIIEL) threads the bilayer. Topologically, residues 229-382 (FYVFFKGVKD…SRPRPDDLEI (154 aa)) are cytoplasmic. A Glycyl lysine isopeptide (Lys-Gly) (interchain with G-Cter in SUMO) cross-link involves residue lysine 237. The segment at 244–382 (SDPYHATTGP…SRPRPDDLEI (139 aa)) is interaction with NOV. Position 247 is a phosphotyrosine (tyrosine 247). Phosphoserine occurs at positions 255, 257, and 262. The segment at 264–382 (KYAYFNGCSS…SRPRPDDLEI (119 aa)) is interaction with UBQLN4. Cysteine 271 is subject to S-nitrosocysteine. Threonine 275 is modified (phosphothreonine). Phosphoserine occurs at positions 306, 314, and 325. Residues 317–332 (QNRMGQAGSTISNSHA) show a composition bias toward polar residues. The interval 317 to 382 (QNRMGQAGST…SRPRPDDLEI (66 aa)) is disordered. Threonine 326 is subject to Phosphothreonine. Serine 328, serine 330, serine 341, and serine 365 each carry phosphoserine. The segment covering 362 to 374 (RPSSRASSRASSR) has biased composition (low complexity). Serine 368 carries the post-translational modification Phosphoserine; by PKC/PRKCG and PKC/PRKCD. 2 positions are modified to phosphoserine: serine 369 and serine 373.

The protein belongs to the connexin family. Alpha-type (group II) subfamily. As to quaternary structure, a connexon is composed of a hexamer of connexins. Interacts with CSNK1D. Interacts with RIC1/CIP150. Interacts (via C-terminus) with TJP1. Interacts (via C-terminus) with SRC (via SH3 domain). Interacts (not ubiquitinated) with UBQLN4 (via UBA domain). Interacts with CNST. Interacts with SGSM3. Interacts with NOV. Interacts with TMEM65. Interacts with ANK3/ANKG and PKP2. Post-translationally, phosphorylation at Ser-325, Ser-328 and Ser-330 by CK1 modulates gap junction assembly. Phosphorylated at Ser-368 by PRKCG; phosphorylation induces disassembly of gap junction plaques and inhibition of gap junction activity. Phosphorylation at Ser-368 by PRKCD triggers its internalization into small vesicles leading to proteasome-mediated degradation. In terms of processing, sumoylated with SUMO1, SUMO2 and SUMO3, which may regulate the level of functional Cx43 gap junctions at the plasma membrane. May be desumoylated by SENP1 or SENP2. Acetylated in the developing cortex; leading to delocalization from the cell membrane. Post-translationally, S-nitrosylation at Cys-271 is enriched at the muscle endothelial gap junction in arteries, it augments channel permeability and may regulate of smooth muscle cell to endothelial cell communication. Expressed in heart, non-sensory epithelial cells, and in fibrocytes of the spiral ligament and the spiral limbus. Expressed in bladder smooth muscle cells (at protein level). Expressed in astrocytes (at protein level).

It localises to the cell membrane. It is found in the cell junction. The protein resides in the gap junction. Its subcellular location is the endoplasmic reticulum. In terms of biological role, gap junction protein that acts as a regulator of bladder capacity. A gap junction consists of a cluster of closely packed pairs of transmembrane channels, the connexons, through which materials of low MW diffuse from one cell to a neighboring cell. Negative regulator of bladder functional capacity: acts by enhancing intercellular electrical and chemical transmission, thus sensitizing bladder muscles to cholinergic neural stimuli and causing them to contract. May play a role in cell growth inhibition through the regulation of NOV expression and localization. Plays an essential role in gap junction communication in the ventricles. Its function is as follows. Connexin 43 is possibly the ATP-induced pore of mouse macrophages. This is Gap junction alpha-1 protein (Gja1) from Mus musculus (Mouse).